The sequence spans 370 residues: Fe(2+) transport protein 2 (370 aa).

A signal peptide spans 1-25 (MMMSSSQTPVRIAFVFLVILAATDA). At 26 to 55 (HSDHRTPPPACGGAAVGGECHSVARALRLK) the chain is on the extracellular side. A helical transmembrane segment spans residues 56 to 76 (LIAIPAILAASVAGVCLPLFA). At 77–85 (RSVPALRPD) the chain is on the cytoplasmic side. The chain crosses the membrane as a helical span at residues 86 to 106 (GGLFAVVKAFASGVILGTGYM). At 107-130 (HVLPDSFNDLTSPCLPRKPWSEFP) the chain is on the extracellular side. A helical membrane pass occupies residues 131-151 (FAAFVAMLAAVFTLMVDSLML). The Cytoplasmic portion of the chain corresponds to 152–215 (TFHTRGSKGR…TTKAQLLRNR (64 aa)). Residues 216–236 (VIVQVLEMGIVVHSVVIGLGM) traverse the membrane as a helical segment. Over 237–247 (GASQNVCTIRP) the chain is Extracellular. A helical transmembrane segment spans residues 248–268 (LVAALCFHQMFEGMGLGGCIL). Over 269–278 (QAGYGGRTRS) the chain is Cytoplasmic. The helical transmembrane segment at 279 to 299 (ALVFFFSTTTPFGIALGLALT) threads the bilayer. Topologically, residues 300 to 309 (RVYSDSSPTA) are extracellular. Residues 310–330 (LVVVGLLNAASAGLLHYMALV) form a helical membrane-spanning segment. Over 331–349 (ELLAADFMGPKLQGNVRLQ) the chain is Cytoplasmic. A helical membrane pass occupies residues 350-370 (LAASLAILLGAGGMSVMAKWA).

It belongs to the ZIP transporter (TC 2.A.5) family.

The protein localises to the cell membrane. Its function is as follows. Iron transporter that may play a role in the uptake of iron from the rhizosphere across the plasma membrane in the root epidermal layer. The sequence is that of Fe(2+) transport protein 2 (IRT2) from Oryza sativa subsp. japonica (Rice).